Consider the following 274-residue polypeptide: NADPH-dependent 7-cyano-7-deazaguanine reductase (274 aa).

Valine 80 to serine 82 serves as a coordination point for substrate. NADPH is bound at residue serine 82–lysine 83. The active-site Thioimide intermediate is cysteine 181. Aspartate 188 serves as the catalytic Proton donor. Histidine 220–glutamate 221 contacts substrate. Residue arginine 249–glycine 250 coordinates NADPH.

It belongs to the GTP cyclohydrolase I family. QueF type 2 subfamily. Homodimer.

The protein localises to the cytoplasm. It carries out the reaction 7-aminomethyl-7-carbaguanine + 2 NADP(+) = 7-cyano-7-deazaguanine + 2 NADPH + 3 H(+). It functions in the pathway tRNA modification; tRNA-queuosine biosynthesis. Functionally, catalyzes the NADPH-dependent reduction of 7-cyano-7-deazaguanine (preQ0) to 7-aminomethyl-7-deazaguanine (preQ1). This Burkholderia pseudomallei (strain 1710b) protein is NADPH-dependent 7-cyano-7-deazaguanine reductase.